The following is a 145-amino-acid chain: Large ribosomal subunit protein uL14m (145 aa).

Residues 1 to 30 (MAFFTGLWGPFTCVSRVLSHHCFSTTGSLS) constitute a mitochondrion transit peptide.

This sequence belongs to the universal ribosomal protein uL14 family. Component of the mitochondrial large ribosomal subunit (mt-LSU). Mature mammalian 55S mitochondrial ribosomes consist of a small (28S) and a large (39S) subunit. The 28S small subunit contains a 12S ribosomal RNA (12S mt-rRNA) and 30 different proteins. The 39S large subunit contains a 16S rRNA (16S mt-rRNA), a copy of mitochondrial valine transfer RNA (mt-tRNA(Val)), which plays an integral structural role, and 52 different proteins. Interacts with MALSU1.

Its subcellular location is the mitochondrion. Functionally, forms part of 2 intersubunit bridges in the assembled ribosome. Upon binding to MALSU1 intersubunit bridge formation is blocked, preventing ribosome formation and repressing translation. In Homo sapiens (Human), this protein is Large ribosomal subunit protein uL14m (MRPL14).